Here is a 418-residue protein sequence, read N- to C-terminus: tRNA(Met) cytidine acetate ligase (418 aa).

Positions 95, 161, and 186 each coordinate ATP.

It belongs to the TmcAL family.

The protein resides in the cytoplasm. It carries out the reaction cytidine(34) in elongator tRNA(Met) + acetate + ATP = N(4)-acetylcytidine(34) in elongator tRNA(Met) + AMP + diphosphate. Catalyzes the formation of N(4)-acetylcytidine (ac(4)C) at the wobble position of elongator tRNA(Met), using acetate and ATP as substrates. First activates an acetate ion to form acetyladenylate (Ac-AMP) and then transfers the acetyl group to tRNA to form ac(4)C34. This chain is tRNA(Met) cytidine acetate ligase, found in Thermotoga petrophila (strain ATCC BAA-488 / DSM 13995 / JCM 10881 / RKU-1).